The chain runs to 261 residues: uncharacterized protein (261 aa).

Positions 1 to 236 (MEIKEITIIG…SRKINEVDNW (236 aa)) constitute an ABC transporter domain. 36–43 (GPTGSGKS) contributes to the ATP binding site.

It belongs to the ABC transporter superfamily.

This is an uncharacterized protein from Methanocaldococcus jannaschii (strain ATCC 43067 / DSM 2661 / JAL-1 / JCM 10045 / NBRC 100440) (Methanococcus jannaschii).